We begin with the raw amino-acid sequence, 494 residues long: ATP synthase subunit beta, chloroplastic (494 aa).

172–179 (GGAGVGKT) contributes to the ATP binding site.

It belongs to the ATPase alpha/beta chains family. In terms of assembly, F-type ATPases have 2 components, CF(1) - the catalytic core - and CF(0) - the membrane proton channel. CF(1) has five subunits: alpha(3), beta(3), gamma(1), delta(1), epsilon(1). CF(0) has four main subunits: a(1), b(1), b'(1) and c(9-12).

It localises to the plastid. The protein localises to the chloroplast thylakoid membrane. The catalysed reaction is ATP + H2O + 4 H(+)(in) = ADP + phosphate + 5 H(+)(out). Functionally, produces ATP from ADP in the presence of a proton gradient across the membrane. The catalytic sites are hosted primarily by the beta subunits. The chain is ATP synthase subunit beta, chloroplastic from Physcomitrium patens (Spreading-leaved earth moss).